The sequence spans 539 residues: Eukaryotic translation initiation factor 3 subunit L (539 aa).

A PCI domain is found at 306 to 514 (TFSDILLYVQ…IHIADTKVSH (209 aa)).

Belongs to the eIF-3 subunit L family. As to quaternary structure, component of the eukaryotic translation initiation factor 3 (eIF-3) complex. The eIF-3 complex interacts with pix.

The protein localises to the cytoplasm. In terms of biological role, component of the eukaryotic translation initiation factor 3 (eIF-3) complex, which is involved in protein synthesis of a specialized repertoire of mRNAs and, together with other initiation factors, stimulates binding of mRNA and methionyl-tRNAi to the 40S ribosome. The eIF-3 complex specifically targets and initiates translation of a subset of mRNAs involved in cell proliferation. In Drosophila willistoni (Fruit fly), this protein is Eukaryotic translation initiation factor 3 subunit L.